The primary structure comprises 84 residues: Cell division topological specificity factor (84 aa).

Belongs to the MinE family.

In terms of biological role, prevents the cell division inhibition by proteins MinC and MinD at internal division sites while permitting inhibition at polar sites. This ensures cell division at the proper site by restricting the formation of a division septum at the midpoint of the long axis of the cell. The polypeptide is Cell division topological specificity factor (Burkholderia mallei (strain NCTC 10247)).